We begin with the raw amino-acid sequence, 351 residues long: Anthranilate phosphoribosyltransferase (351 aa).

5-phospho-alpha-D-ribose 1-diphosphate contacts are provided by residues G89, 92-93 (GD), T97, 99-102 (NIST), 117-125 (KHGNRSASG), and S129. G89 contributes to the anthranilate binding site. S101 provides a ligand contact to Mg(2+). An anthranilate-binding site is contributed by N120. Residue R175 participates in anthranilate binding. Residues D234 and E235 each coordinate Mg(2+).

It belongs to the anthranilate phosphoribosyltransferase family. As to quaternary structure, homodimer. It depends on Mg(2+) as a cofactor.

The catalysed reaction is N-(5-phospho-beta-D-ribosyl)anthranilate + diphosphate = 5-phospho-alpha-D-ribose 1-diphosphate + anthranilate. It participates in amino-acid biosynthesis; L-tryptophan biosynthesis; L-tryptophan from chorismate: step 2/5. Catalyzes the transfer of the phosphoribosyl group of 5-phosphorylribose-1-pyrophosphate (PRPP) to anthranilate to yield N-(5'-phosphoribosyl)-anthranilate (PRA). This chain is Anthranilate phosphoribosyltransferase, found in Synechococcus sp. (strain CC9902).